We begin with the raw amino-acid sequence, 238 residues long: Ubiquinone biosynthesis O-methyltransferase (238 aa).

Residues Arg36, Gly56, Asp77, and Met125 each contribute to the S-adenosyl-L-methionine site.

Belongs to the methyltransferase superfamily. UbiG/COQ3 family.

It carries out the reaction a 3-demethylubiquinol + S-adenosyl-L-methionine = a ubiquinol + S-adenosyl-L-homocysteine + H(+). It catalyses the reaction a 3-(all-trans-polyprenyl)benzene-1,2-diol + S-adenosyl-L-methionine = a 2-methoxy-6-(all-trans-polyprenyl)phenol + S-adenosyl-L-homocysteine + H(+). The protein operates within cofactor biosynthesis; ubiquinone biosynthesis. Its function is as follows. O-methyltransferase that catalyzes the 2 O-methylation steps in the ubiquinone biosynthetic pathway. The sequence is that of Ubiquinone biosynthesis O-methyltransferase from Histophilus somni (strain 2336) (Haemophilus somnus).